The primary structure comprises 792 residues: Cullin-4 (792 aa).

Polar residues predominate over residues 1 to 10 (MSLPTKRSTF). Residues 1 to 43 (MSLPTKRSTFSAASASDDSSYSSPPMKKAKNDLHHSPQHPNTA) form a disordered region. The span at 11 to 23 (SAASASDDSSYSS) shows a compositional bias: low complexity. Residues 724–784 (DRQYQIDAAI…REYLEREKSN (61 aa)) enclose the Cullin neddylation domain. Lys-738 participates in a covalent cross-link: Glycyl lysine isopeptide (Lys-Gly) (interchain with G-Cter in NEDD8).

The protein belongs to the cullin family. In terms of assembly, interacts with COP10, CSN3, CSN4, CSN5, CSN8, DDB1A, DDB1B, DDB2, DET1 and RBX1. Neddylated (rubylated). Deneddylated via its interaction with the COP9 signalosome (CSN) complex. As to expression, ubiquitous.

Its subcellular location is the nucleus. Its pathway is protein modification; protein ubiquitination. In terms of biological role, component of the CUL4-RBX1-CDD (COP10-DDB1a-DET1) E3 ubiquitin-protein ligase complex which mediates the ubiquitination and subsequent proteasomal degradation of target proteins. Participates in the CDD complex to light-mediated control of development. May repress photomorphogenesis through enhancing COP1 E3 ubiquitin-protein ligase activity. Acts together with the CUL4-DDB1-COP1-SPA E3 ubiquitin-protein ligase complexes in the repression of photomorphogenesis and flowering time. Component ot the CUL4-RBX1-DDB1-PRL1 E3 ubiquitin-protein ligase complex which mediates ubiquitination and subsequent degradation of AKIN10. Component of the CUL4-RBX1-DDB1-DWA1/DWA2 E3 ubiquitin-protein ligase complex that acts as a negative regulator in abscisic acid (ABA) signaling and may target ABI5 for degradation. The chain is Cullin-4 (CUL4) from Arabidopsis thaliana (Mouse-ear cress).